The chain runs to 207 residues: Hydrogenase expression/formation protein HoxM (207 aa).

3 residues coordinate Ni(2+): E19, D65, and H96.

It belongs to the peptidase A31 family.

Its function is as follows. Not known. Could be involved in the processing of hydrogenase. The polypeptide is Hydrogenase expression/formation protein HoxM (hoxM) (Azotobacter vinelandii).